We begin with the raw amino-acid sequence, 450 residues long: Immunoglobulin G-binding protein A (450 aa).

Positions 1 to 36 are cleaved as a signal peptide; it reads MKKKNIYSIRKLGVGIASVTLGTLLISGGVTPAANA. The YSIRK-G/S signaling motif signature appears at 7–18; sequence YSIRKLGVGIAS. The Immunoglobulin-binding region E repeat unit spans residues 37–92; that stretch reads AQHDEAQQNAFYQVLNMPNLNADQRNGFIQSLKDDPSQSANVLGEAQKLNDSQAPK. The Immunoglobulin-binding region D repeat unit spans residues 93-153; the sequence is ADAQQNNFNK…KKLNESQAPK (61 aa). One copy of the Immunoglobulin-binding region A repeat lies at 154-211; it reads ADNNFNKEQQNAFYEILNMPNLNEEQRNGFIQSLKDDPSQSANLLSEAKKLNESQAPK. The Immunoglobulin-binding region B/C repeat unit spans residues 212 to 269; sequence ADNKFNKEQQNAFYEILHLPNLNEEQRNGFIQSLKDDPSVSKEILAEAKKLNDAQAPK. Basic and acidic residues predominate over residues 260–354; sequence KKLNDAQAPK…GNKPGKEDGN (95 aa). Disordered stretches follow at residues 260–365 and 401–421; these read KKLN…GDTV and KKQPANHADANKAQALPETGE. Tandem repeats lie at residues 268–275, 276–283, 284–291, 292–299, 300–307, 308–315, 316–323, 324–331, 332–339, 340–347, and 348–355. Positions 268 to 355 are 12 X 8 AA approximate tandem repeats; it reads PKEEDNKKPG…NKPGKEDGNG (88 aa). In terms of domain architecture, LysM spans 355 to 399; it reads GVHVVKPGDTVNDIAKANGTTADKIAADNKLADKNMIKPGQELVV. Residues 416–420 carry the LPXTG sorting signal motif; the sequence is LPETG. Residue Thr-419 is modified to Pentaglycyl murein peptidoglycan amidated threonine. Positions 420 to 450 are cleaved as a propeptide — removed by sortase; the sequence is GEENPFIGTTVFGGLSLALGAALLAGRRREL.

This sequence belongs to the immunoglobulin-binding protein SpA family. As to quaternary structure, interacts with host TNFRSF1A; this interaction leads to the stimulation of both surface expression and shedding of TNFRSF1A.

It is found in the secreted. The protein resides in the cell wall. Plays a role in the inhibition of the host innate and adaptive immune responses. Possesses five immunoglobulin-binding domains that capture both the fragment crystallizable region (Fc region) and the Fab region (part of Ig that identifies antigen) of immunoglobulins. In turn, Staphylococcus aureus is protected from phagocytic killing via inhibition of Ig Fc region. In addition, the host elicited B-cell response is prevented due to a decrease of antibody-secreting cell proliferation that enter the bone marrow, thereby decreasing long-term antibody production. Inhibits osteogenesis by preventing osteoblast proliferation and expression of alkaline phosphatase, type I collagen, osteopontin and osteocalcin. Acts directly as a pro-inflammatory factor in the lung through its ability to bind and activate tumor necrosis factor alpha receptor 1/TNFRSF1A. The chain is Immunoglobulin G-binding protein A (spa) from Staphylococcus aureus (strain Mu50 / ATCC 700699).